A 337-amino-acid polypeptide reads, in one-letter code: 6-phosphogluconolactonase (337 aa).

Belongs to the cycloisomerase 2 family.

The catalysed reaction is 6-phospho-D-glucono-1,5-lactone + H2O = 6-phospho-D-gluconate + H(+). The protein operates within carbohydrate degradation; pentose phosphate pathway; D-ribulose 5-phosphate from D-glucose 6-phosphate (oxidative stage): step 2/3. Its function is as follows. Catalyzes the hydrolysis of 6-phosphogluconolactone to 6-phosphogluconate. The chain is 6-phosphogluconolactonase from Blochmanniella pennsylvanica (strain BPEN).